Reading from the N-terminus, the 373-residue chain is tRNA-specific 2-thiouridylase MnmA (373 aa).

ATP-binding positions include 12–19 (GMSGGVDS) and methionine 38. The interaction with target base in tRNA stretch occupies residues 98 to 100 (NPD). Cysteine 103 functions as the Nucleophile in the catalytic mechanism. Cysteine 103 and cysteine 200 are disulfide-bonded. Glycine 127 is a binding site for ATP. The tract at residues 150 to 152 (KDQ) is interaction with tRNA. Cysteine 200 acts as the Cysteine persulfide intermediate in catalysis. The tract at residues 312 to 313 (RY) is interaction with tRNA.

This sequence belongs to the MnmA/TRMU family.

Its subcellular location is the cytoplasm. It catalyses the reaction S-sulfanyl-L-cysteinyl-[protein] + uridine(34) in tRNA + AH2 + ATP = 2-thiouridine(34) in tRNA + L-cysteinyl-[protein] + A + AMP + diphosphate + H(+). Functionally, catalyzes the 2-thiolation of uridine at the wobble position (U34) of tRNA, leading to the formation of s(2)U34. The polypeptide is tRNA-specific 2-thiouridylase MnmA (Streptococcus thermophilus (strain ATCC BAA-491 / LMD-9)).